The primary structure comprises 839 residues: Dynein axonemal assembly factor 5 (839 aa).

HEAT repeat units lie at residues 10 to 48 (TSDV…DEKL), 54 to 92 (QHVF…HVPR), 94 to 137 (EEAL…VCGK), 140 to 178 (APYL…CIPE), 181 to 219 (HMQA…YSSG), 221 to 257 (SVDD…KLQD), 259 to 297 (YSFF…QWEK), 578 to 617 (GETL…KASE), 675 to 713 (LQVE…TCER), 717 to 755 (PDKL…CITD), and 723 to 761 (IYPE…ERTT).

The protein belongs to the DNAAF5 family. As to quaternary structure, interacts with DNAI2; probably involved in outer arm dynein assembly.

The protein localises to the cytoplasm. It localises to the dynein axonemal particle. Functionally, cytoplasmic protein involved in the delivery of the dynein machinery to the motile cilium. It is required for the assembly of the axonemal dynein inner and outer arms, two structures attached to the peripheral outer doublet A microtubule of the axoneme, that play a crucial role in cilium motility. The polypeptide is Dynein axonemal assembly factor 5 (Xenopus laevis (African clawed frog)).